Reading from the N-terminus, the 1091-residue chain is ATP-dependent helicase/deoxyribonuclease subunit B (1091 aa).

Belongs to the helicase family. AddB/RexB type 2 subfamily. As to quaternary structure, heterodimer of AddA and RexB. Mg(2+) serves as cofactor.

In terms of biological role, the heterodimer acts as both an ATP-dependent DNA helicase and an ATP-dependent, dual-direction single-stranded exonuclease. Recognizes the chi site generating a DNA molecule suitable for the initiation of homologous recombination. This subunit has 5' -&gt; 3' nuclease activity but not helicase activity. The chain is ATP-dependent helicase/deoxyribonuclease subunit B from Streptococcus pneumoniae (strain CGSP14).